The primary structure comprises 310 residues: MNSFAMLFPGQGSQYKNMLSSFFQKKNNLFKKIFDEASEYVNYNLLNLIKNGAKKKRDDYKYIQSAILTSSIAIYQLWKEKNGRRPALMSGHSLGEYSALVCANAIKFSDALKIVKLRSKLMQKIIINKPSLVQAIIGLDKVIIKNICLQYLPKIVSIASINSDDQIIISGEKLAVREVGLKCKKKGAKYVIKLNINTPIHSQLMKPVSEQIKYLLKSIKIKSPQIPVINNVDVICEKNEKKIKKALVRQFYSTVRWKEIIDLIKSKKIFTMLEIGPNKILSNLIKKNDNITVLNTNNLKNFLIAFKTIH.

Catalysis depends on residues Ser-93 and His-201.

This sequence belongs to the FabD family.

The enzyme catalyses holo-[ACP] + malonyl-CoA = malonyl-[ACP] + CoA. It participates in lipid metabolism; fatty acid biosynthesis. In Buchnera aphidicola subsp. Schizaphis graminum (strain Sg), this protein is Malonyl CoA-acyl carrier protein transacylase (fabD).